The following is a 441-amino-acid chain: Maltokinase (441 aa).

It belongs to the aminoglycoside phosphotransferase family. In terms of assembly, monomer.

The enzyme catalyses D-maltose + ATP = alpha-maltose 1-phosphate + ADP + H(+). It participates in glycan biosynthesis; glycogen biosynthesis. Functionally, catalyzes the ATP-dependent phosphorylation of maltose to maltose 1-phosphate. Is involved in a branched alpha-glucan biosynthetic pathway from trehalose, together with TreS, GlgE and GlgB. The polypeptide is Maltokinase (mak) (Mycolicibacterium vanbaalenii (strain DSM 7251 / JCM 13017 / BCRC 16820 / KCTC 9966 / NRRL B-24157 / PYR-1) (Mycobacterium vanbaalenii)).